Here is a 427-residue protein sequence, read N- to C-terminus: Glutamate-1-semialdehyde 2,1-aminomutase (427 aa).

Lysine 265 bears the N6-(pyridoxal phosphate)lysine mark.

It belongs to the class-III pyridoxal-phosphate-dependent aminotransferase family. HemL subfamily. As to quaternary structure, homodimer. Requires pyridoxal 5'-phosphate as cofactor.

It localises to the cytoplasm. The enzyme catalyses (S)-4-amino-5-oxopentanoate = 5-aminolevulinate. The protein operates within porphyrin-containing compound metabolism; protoporphyrin-IX biosynthesis; 5-aminolevulinate from L-glutamyl-tRNA(Glu): step 2/2. This Pseudomonas putida (strain ATCC 47054 / DSM 6125 / CFBP 8728 / NCIMB 11950 / KT2440) protein is Glutamate-1-semialdehyde 2,1-aminomutase.